Consider the following 280-residue polypeptide: Phosphatidylserine decarboxylase proenzyme (280 aa).

Active-site charge relay system; for autoendoproteolytic cleavage activity residues include Asp88, His145, and Ser249. Residue Ser249 is the Schiff-base intermediate with substrate; via pyruvic acid; for decarboxylase activity of the active site. At Ser249 the chain carries Pyruvic acid (Ser); by autocatalysis.

It belongs to the phosphatidylserine decarboxylase family. PSD-B subfamily. Prokaryotic type I sub-subfamily. Heterodimer of a large membrane-associated beta subunit and a small pyruvoyl-containing alpha subunit. Pyruvate serves as cofactor. In terms of processing, is synthesized initially as an inactive proenzyme. Formation of the active enzyme involves a self-maturation process in which the active site pyruvoyl group is generated from an internal serine residue via an autocatalytic post-translational modification. Two non-identical subunits are generated from the proenzyme in this reaction, and the pyruvate is formed at the N-terminus of the alpha chain, which is derived from the carboxyl end of the proenzyme. The autoendoproteolytic cleavage occurs by a canonical serine protease mechanism, in which the side chain hydroxyl group of the serine supplies its oxygen atom to form the C-terminus of the beta chain, while the remainder of the serine residue undergoes an oxidative deamination to produce ammonia and the pyruvoyl prosthetic group on the alpha chain. During this reaction, the Ser that is part of the protease active site of the proenzyme becomes the pyruvoyl prosthetic group, which constitutes an essential element of the active site of the mature decarboxylase.

The protein localises to the cell membrane. The enzyme catalyses a 1,2-diacyl-sn-glycero-3-phospho-L-serine + H(+) = a 1,2-diacyl-sn-glycero-3-phosphoethanolamine + CO2. It functions in the pathway phospholipid metabolism; phosphatidylethanolamine biosynthesis; phosphatidylethanolamine from CDP-diacylglycerol: step 2/2. Catalyzes the formation of phosphatidylethanolamine (PtdEtn) from phosphatidylserine (PtdSer). In Chromobacterium violaceum (strain ATCC 12472 / DSM 30191 / JCM 1249 / CCUG 213 / NBRC 12614 / NCIMB 9131 / NCTC 9757 / MK), this protein is Phosphatidylserine decarboxylase proenzyme.